The sequence spans 366 residues: Class I histocompatibility antigen, Gogo-C*0202 alpha chain (366 aa).

An N-terminal signal peptide occupies residues 1–24 (MRVMAPRTLILLLSGALALTETWA). The interval 25–114 (GSHSMRYFYT…LRGYYNQSED (90 aa)) is alpha-1. Residues 25–308 (GSHSMRYFYT…EPSSQPTIPI (284 aa)) are Extracellular-facing. N110 carries an N-linked (GlcNAc...) asparagine glycan. The alpha-2 stretch occupies residues 115 to 206 (GSHTLQSMYG…ENGKETLQRA (92 aa)). 2 disulfides stabilise this stretch: C125–C188 and C227–C283. The segment at 207 to 298 (EPPKTHVTHH…GLPEPLTLRW (92 aa)) is alpha-3. The region spanning 209 to 297 (PKTHVTHHPL…EGLPEPLTLR (89 aa)) is the Ig-like C1-type domain. Residues 299–308 (EPSSQPTIPI) are connecting peptide. Residues 309–332 (VGIVVGLAVLVVLAVLGAVVTAMM) form a helical membrane-spanning segment. Residues 333-366 (CRRKSSGGKGGSCSQAACSNSAQGSDESLITCKA) lie on the Cytoplasmic side of the membrane.

The protein belongs to the MHC class I family. Heterodimer of an alpha chain and a beta chain (beta-2-microglobulin).

Its subcellular location is the membrane. Involved in the presentation of foreign antigens to the immune system. The protein is Class I histocompatibility antigen, Gogo-C*0202 alpha chain of Gorilla gorilla gorilla (Western lowland gorilla).